The primary structure comprises 490 residues: Glycogen synthase kinase-3 alpha (490 aa).

Residues 1–15 (MSGGGPSGGGPGGSG) are compositionally biased toward gly residues. A disordered region spans residues 1 to 97 (MSGGGPSGGG…PPGVKLGRDS (97 aa)). Ser-2 is modified (N-acetylserine). Phosphoserine is present on Ser-2. A Phosphoserine; by PKB/AKT1 modification is found at Ser-21. Over residues 25–82 (PGGGGGGGGGGPGGSASGPGGTGGGKASVGAMGGGVGASSSGGGPSGSGGGGSGGPGA) the composition is skewed to gly residues. 3 positions are modified to phosphoserine: Ser-72, Ser-77, and Ser-97. The region spanning 119–404 (YTDIKVIGNG…PLEACAHSFF (286 aa)) is the Protein kinase domain. Residues 125 to 133 (IGNGSFGVV) and Lys-148 each bind ATP. The active-site Proton acceptor is Asp-244. The residue at position 279 (Tyr-279) is a Phosphotyrosine. The tract at residues 451 to 490 (GPASPLTTSYNPSSQALTEAQTGQDWQPSDATTATLASSS) is disordered. Residues 455–480 (PLTTSYNPSSQALTEAQTGQDWQPSD) show a composition bias toward polar residues. Positions 481 to 490 (ATTATLASSS) are enriched in low complexity.

The protein belongs to the protein kinase superfamily. CMGC Ser/Thr protein kinase family. GSK-3 subfamily. In terms of assembly, monomer. Interacts with AXIN1 and CTNNB1/beta-catenin. Interacts with ARRB2. Interacts with CTNND2. Interacts with LMBR1L. Interacts with DDX3X. Interacts with TNFRSF10B. Phosphorylated by AKT1 at Ser-21: upon insulin-mediated signaling, the activated PKB/AKT1 protein kinase phosphorylates and deactivates GSK3A, resulting in the dephosphorylation and activation of GYS1. Activated by phosphorylation at Tyr-279.

It catalyses the reaction L-seryl-[tau protein] + ATP = O-phospho-L-seryl-[tau protein] + ADP + H(+). It carries out the reaction L-threonyl-[tau protein] + ATP = O-phospho-L-threonyl-[tau protein] + ADP + H(+). The catalysed reaction is L-seryl-[protein] + ATP = O-phospho-L-seryl-[protein] + ADP + H(+). The enzyme catalyses L-threonyl-[protein] + ATP = O-phospho-L-threonyl-[protein] + ADP + H(+). Its activity is regulated as follows. Activated by phosphorylation at Tyr-279. In response to insulin, inhibited by phosphorylation at Ser-21 by PKB/AKT1; phosphorylation at this site causes a conformational change, preventing access of substrates to the active site. Inhibited by lithium. In terms of biological role, constitutively active protein kinase that acts as a negative regulator in the hormonal control of glucose homeostasis, Wnt signaling and regulation of transcription factors and microtubules, by phosphorylating and inactivating glycogen synthase (GYS1 or GYS2), CTNNB1/beta-catenin, APC and AXIN1. Requires primed phosphorylation of the majority of its substrates. Contributes to insulin regulation of glycogen synthesis by phosphorylating and inhibiting GYS1 activity and hence glycogen synthesis. Regulates glycogen metabolism in liver, but not in muscle. May also mediate the development of insulin resistance by regulating activation of transcription factors. In Wnt signaling, regulates the level and transcriptional activity of nuclear CTNNB1/beta-catenin. Facilitates amyloid precursor protein (APP) processing and the generation of APP-derived amyloid plaques found in Alzheimer disease. May be involved in the regulation of replication in pancreatic beta-cells. Is necessary for the establishment of neuronal polarity and axon outgrowth. Through phosphorylation of the anti-apoptotic protein MCL1, may control cell apoptosis in response to growth factors deprivation. Acts as a regulator of autophagy by mediating phosphorylation of KAT5/TIP60 under starvation conditions, activating KAT5/TIP60 acetyltransferase activity and promoting acetylation of key autophagy regulators, such as ULK1 and RUBCNL/Pacer. Negatively regulates extrinsic apoptotic signaling pathway via death domain receptors. Promotes the formation of an anti-apoptotic complex, made of DDX3X, BRIC2 and GSK3B, at death receptors, including TNFRSF10B. The anti-apoptotic function is most effective with weak apoptotic signals and can be overcome by stronger stimulation. The protein is Glycogen synthase kinase-3 alpha (Gsk3a) of Mus musculus (Mouse).